Here is a 432-residue protein sequence, read N- to C-terminus: D-amino acid dehydrogenase (432 aa).

Position 3–17 (3–17 (VLVLGGGVIGVTSAY)) interacts with FAD.

It belongs to the DadA oxidoreductase family. Requires FAD as cofactor.

The catalysed reaction is a D-alpha-amino acid + A + H2O = a 2-oxocarboxylate + AH2 + NH4(+). It participates in amino-acid degradation; D-alanine degradation; NH(3) and pyruvate from D-alanine: step 1/1. Its function is as follows. Oxidative deamination of D-amino acids. This Delftia acidovorans (strain DSM 14801 / SPH-1) protein is D-amino acid dehydrogenase.